The chain runs to 468 residues: Ribosomal lysine N-methyltransferase 4 (468 aa).

The SET domain maps to 22-302; the sequence is EKIGLNDYRH…KGEQLWNTYG (281 aa). The tract at residues 188–225 is disordered; sequence ISNENEKSAAETSIKEDKNGDAAKKNEGSANQDDEKLH. An S-adenosyl-L-methionine-binding site is contributed by Tyr301.

It belongs to the class V-like SAM-binding methyltransferase superfamily. Histone-lysine methyltransferase family. SETD6 subfamily.

It is found in the nucleus. Its function is as follows. S-adenosyl-L-methionine-dependent protein-lysine N-methyltransferase that monomethylates 60S ribosomal protein L42 (rpl42) at 'Lys-55'. The protein is Ribosomal lysine N-methyltransferase 4 of Schizosaccharomyces pombe (strain 972 / ATCC 24843) (Fission yeast).